Consider the following 103-residue polypeptide: Cell division suppressor protein YneA (103 aa).

The region spanning valine 36–leucine 87 is the LysM domain.

This sequence belongs to the YneA family.

The protein localises to the cytoplasm. Inhibits cell division during the SOS response. Affects a later stage of the cell division protein assembly, after the assembly of the Z ring, by probably suppressing recruitment of FtsL and/or DivIC to the division machinery. This is Cell division suppressor protein YneA from Bacillus velezensis (strain DSM 23117 / BGSC 10A6 / LMG 26770 / FZB42) (Bacillus amyloliquefaciens subsp. plantarum).